A 229-amino-acid chain; its full sequence is Lipoprotein-releasing system ATP-binding protein LolD (229 aa).

In terms of domain architecture, ABC transporter spans leucine 7–leucine 229. Glycine 43–serine 50 serves as a coordination point for ATP.

The protein belongs to the ABC transporter superfamily. Lipoprotein translocase (TC 3.A.1.125) family. As to quaternary structure, the complex is composed of two ATP-binding proteins (LolD) and two transmembrane proteins (LolC and LolE).

It is found in the cell membrane. Functionally, part of the ABC transporter complex LolCDE involved in the translocation of lipoproteins, in an ATP-dependent manner. The chain is Lipoprotein-releasing system ATP-binding protein LolD from Wigglesworthia glossinidia brevipalpis.